Consider the following 544-residue polypeptide: Methionine--tRNA ligase (544 aa).

The 'HIGH' region motif lies at 10 to 20; that stretch reads PYANGSLHLGH. 4 residues coordinate Zn(2+): C141, C144, C153, and C156. The 'KMSKS' region motif lies at 329–333; the sequence is KLSTS. T332 serves as a coordination point for ATP.

It belongs to the class-I aminoacyl-tRNA synthetase family. MetG type 1 subfamily. Monomer. Requires Zn(2+) as cofactor.

Its subcellular location is the cytoplasm. The enzyme catalyses tRNA(Met) + L-methionine + ATP = L-methionyl-tRNA(Met) + AMP + diphosphate. In terms of biological role, is required not only for elongation of protein synthesis but also for the initiation of all mRNA translation through initiator tRNA(fMet) aminoacylation. The chain is Methionine--tRNA ligase from Bacillus mycoides (strain KBAB4) (Bacillus weihenstephanensis).